Consider the following 506-residue polypeptide: UPF0371 protein FN1121 (506 aa).

Belongs to the UPF0371 family.

The protein is UPF0371 protein FN1121 of Fusobacterium nucleatum subsp. nucleatum (strain ATCC 25586 / DSM 15643 / BCRC 10681 / CIP 101130 / JCM 8532 / KCTC 2640 / LMG 13131 / VPI 4355).